Consider the following 443-residue polypeptide: Tubulin beta-1 chain (443 aa).

Positions 11, 69, 138, 142, 143, 144, 204, and 226 each coordinate GTP. A Mg(2+)-binding site is contributed by Glu69. Residues 424–443 (QYQDATAEREGEYEEDYDEA) form a disordered region. Acidic residues predominate over residues 434-443 (GEYEEDYDEA).

This sequence belongs to the tubulin family. In terms of assembly, dimer of alpha and beta chains. A typical microtubule is a hollow water-filled tube with an outer diameter of 25 nm and an inner diameter of 15 nM. Alpha-beta heterodimers associate head-to-tail to form protofilaments running lengthwise along the microtubule wall with the beta-tubulin subunit facing the microtubule plus end conferring a structural polarity. Microtubules usually have 13 protofilaments but different protofilament numbers can be found in some organisms and specialized cells. The cofactor is Mg(2+).

The protein localises to the cytoplasm. The protein resides in the cytoskeleton. Its function is as follows. Tubulin is the major constituent of microtubules, a cylinder consisting of laterally associated linear protofilaments composed of alpha- and beta-tubulin heterodimers. Microtubules grow by the addition of GTP-tubulin dimers to the microtubule end, where a stabilizing cap forms. Below the cap, tubulin dimers are in GDP-bound state, owing to GTPase activity of alpha-tubulin. The protein is Tubulin beta-1 chain (TUBB1) of Anemia phyllitidis (Fern).